The following is a 293-amino-acid chain: Nucleotide-binding protein CKR_3143 (293 aa).

8 to 15 (GLSGAGKT) provides a ligand contact to ATP. Position 59 to 62 (59 to 62 (DIRG)) interacts with GTP.

Belongs to the RapZ-like family.

Functionally, displays ATPase and GTPase activities. This chain is Nucleotide-binding protein CKR_3143, found in Clostridium kluyveri (strain NBRC 12016).